Reading from the N-terminus, the 319-residue chain is D-alanine--D-alanine ligase (319 aa).

A disordered region spans residues 1–23; sequence MTGPEWAHTRGTKVGQSSRTPPK. The ATP-grasp domain maps to 120 to 313; the sequence is KDAFVAAGLP…FGKLCAWMVE (194 aa). An ATP-binding site is contributed by 147–197; it reads MQPPYVVKPNNEGSSVGVYLVHEAANGPPQLSEDMPQEVMVEAFAPGRELT. The Mg(2+) site is built by D264, E280, and N282.

Belongs to the D-alanine--D-alanine ligase family. It depends on Mg(2+) as a cofactor. The cofactor is Mn(2+).

Its subcellular location is the cytoplasm. It carries out the reaction 2 D-alanine + ATP = D-alanyl-D-alanine + ADP + phosphate + H(+). Its pathway is cell wall biogenesis; peptidoglycan biosynthesis. In terms of biological role, cell wall formation. The chain is D-alanine--D-alanine ligase from Roseobacter denitrificans (strain ATCC 33942 / OCh 114) (Erythrobacter sp. (strain OCh 114)).